Reading from the N-terminus, the 137-residue chain is Fibroblast growth factor 2 (137 aa).

Asparagine 27 provides a ligand contact to heparin. Tyrosine 73 is subject to Phosphotyrosine; by TEC. Lysine 86 is covalently cross-linked (Glycyl lysine isopeptide (Lys-Gly) (interchain with G-Cter in SUMO1)). The interval 119–135 (KRTGQYKLGSKTGPGQK) is heparin-binding.

Belongs to the heparin-binding growth factors family. As to quaternary structure, monomer. Homodimer. Interacts with FGFR1, FGFR2, FGFR3 and FGFR4. Affinity between fibroblast growth factors (FGFs) and their receptors is increased by heparan sulfate glycosaminoglycans that function as coreceptors. Interacts with CSPG4, FGFBP1 and TEC. Found in a complex with FGFBP1, FGF1 and FGF2. Interacts with FGFBP3. Interacts with integrin ITGAV:ITGB3; the interaction is required for FGF2 signaling. Interacts with SNORC (via the extracellular domain). Interacts with glypican GPC3. In terms of processing, phosphorylation at Tyr-73 regulates FGF2 unconventional secretion.

It localises to the secreted. It is found in the nucleus. In terms of biological role, acts as a ligand for FGFR1, FGFR2, FGFR3 and FGFR4. Also acts as an integrin ligand which is required for FGF2 signaling. Binds to integrin ITGAV:ITGB3. Plays an important role in the regulation of cell survival, cell division, cell differentiation and cell migration. Functions as a potent mitogen in vitro. Can induce angiogenesis. Mediates phosphorylation of ERK1/2 and thereby promotes retinal lens fiber differentiation. In Oryctolagus cuniculus (Rabbit), this protein is Fibroblast growth factor 2 (FGF2).